A 330-amino-acid chain; its full sequence is MTKTYTKAKEMAELVGTQGWMDDALSSKDELKAENGRPGPFGLVAGLNEEHDSIEEEEEEEDDGEKPKRRGPKKKKMTKARLERFRARRVKANARERTRMHGLNDALDNLRRVMPCYSKTQKLSKIETLRLARNYIWALSEVLETGQTPEGKSFVEMLCKGLSQPTSNLVAGCLQLGPQTLFLEKHEEKTPGCESAISSHSFTYQSPGLPSPPYGSMETHLLHLKPPAFKSLVDASFGNPPDCTTPPYEGPLTPPLSISGNFSLKQDGSPDLDKPYAFMAHYPSVSLAGAHGHPTHFQNAVPRYEIPIDMSYESYPHHVAGPQLNAIFNE.

Positions 1 to 79 are disordered; sequence MTKTYTKAKE…RGPKKKKMTK (79 aa). A compositionally biased stretch (basic and acidic residues) spans 25-35; the sequence is LSSKDELKAEN. Over residues 52 to 64 the composition is skewed to acidic residues; sequence DSIEEEEEEEDDG. The segment covering 67-79 has biased composition (basic residues); that stretch reads PKRRGPKKKKMTK. A Nuclear localization signal motif is present at residues 73-79; sequence KKKKMTK. Residues 87–139 form the bHLH domain; sequence ARRVKANARERTRMHGLNDALDNLRRVMPCYSKTQKLSKIETLRLARNYIWAL. The segment at 162–183 is leucine-zipper; sequence LSQPTSNLVAGCLQLGPQTLFL.

As to quaternary structure, efficient DNA binding requires dimerization with another bHLH protein. In terms of processing, serine or threonine phosphorylation within the basic region may regulate neurogenic activity. Expressed in both the developing central nervous system and peripheral nervous system.

It is found in the nucleus. Functionally, probably acts as a transcriptional activator. Mediates neuronal differentiation. Required for the regulation of amacrine cell fate specification in the retina. The polypeptide is Neurogenic differentiation factor 4 (NEUROD4) (Gallus gallus (Chicken)).